Reading from the N-terminus, the 172-residue chain is Large ribosomal subunit protein uL10 (172 aa).

This sequence belongs to the universal ribosomal protein uL10 family. In terms of assembly, part of the ribosomal stalk of the 50S ribosomal subunit. The N-terminus interacts with L11 and the large rRNA to form the base of the stalk. The C-terminus forms an elongated spine to which L12 dimers bind in a sequential fashion forming a multimeric L10(L12)X complex.

In terms of biological role, forms part of the ribosomal stalk, playing a central role in the interaction of the ribosome with GTP-bound translation factors. The sequence is that of Large ribosomal subunit protein uL10 from Mesorhizobium japonicum (strain LMG 29417 / CECT 9101 / MAFF 303099) (Mesorhizobium loti (strain MAFF 303099)).